We begin with the raw amino-acid sequence, 235 residues long: Large ribosomal subunit protein uL3 (235 aa).

The interval 138–157 is disordered; it reads SVSHRSHGSTGGRQDPGKTF. The residue at position 151 (Gln-151) is an N5-methylglutamine.

This sequence belongs to the universal ribosomal protein uL3 family. As to quaternary structure, part of the 50S ribosomal subunit. Forms a cluster with proteins L14 and L19. Post-translationally, methylated by PrmB.

Its function is as follows. One of the primary rRNA binding proteins, it binds directly near the 3'-end of the 23S rRNA, where it nucleates assembly of the 50S subunit. The polypeptide is Large ribosomal subunit protein uL3 (Rhodospirillum centenum (strain ATCC 51521 / SW)).